Here is a 220-residue protein sequence, read N- to C-terminus: Adenylate kinase (220 aa).

Residue 10 to 15 coordinates ATP; sequence GAGKGT. An NMP region spans residues 30–59; it reads STGDMLRAAVKAGTPLGVEAKGYMDAGKLV. Residues Thr-31, Arg-36, 57-59, 85-88, and Gln-92 contribute to the AMP site; these read KLV and GFPR. Residues 122–159 are LID; it reads GRRTHPASGRTYHVKFNPPKVEGKDDVTGEPLIQRDDD. Residues Arg-123 and 132–133 contribute to the ATP site; that span reads TY. Positions 156 and 167 each coordinate AMP. Gly-206 serves as a coordination point for ATP.

The protein belongs to the adenylate kinase family. Monomer.

The protein resides in the cytoplasm. The enzyme catalyses AMP + ATP = 2 ADP. Its pathway is purine metabolism; AMP biosynthesis via salvage pathway; AMP from ADP: step 1/1. Catalyzes the reversible transfer of the terminal phosphate group between ATP and AMP. Plays an important role in cellular energy homeostasis and in adenine nucleotide metabolism. In Burkholderia multivorans (strain ATCC 17616 / 249), this protein is Adenylate kinase.